We begin with the raw amino-acid sequence, 165 residues long: SsrA-binding protein (165 aa).

Residues 141-165 (KLHDKRQEEKRKQADREVKSALARY) are disordered. Residues 145–159 (KRQEEKRKQADREVK) show a composition bias toward basic and acidic residues.

The protein belongs to the SmpB family.

It is found in the cytoplasm. In terms of biological role, required for rescue of stalled ribosomes mediated by trans-translation. Binds to transfer-messenger RNA (tmRNA), required for stable association of tmRNA with ribosomes. tmRNA and SmpB together mimic tRNA shape, replacing the anticodon stem-loop with SmpB. tmRNA is encoded by the ssrA gene; the 2 termini fold to resemble tRNA(Ala) and it encodes a 'tag peptide', a short internal open reading frame. During trans-translation Ala-aminoacylated tmRNA acts like a tRNA, entering the A-site of stalled ribosomes, displacing the stalled mRNA. The ribosome then switches to translate the ORF on the tmRNA; the nascent peptide is terminated with the 'tag peptide' encoded by the tmRNA and targeted for degradation. The ribosome is freed to recommence translation, which seems to be the essential function of trans-translation. The chain is SsrA-binding protein from Prochlorococcus marinus (strain MIT 9303).